The chain runs to 370 residues: Phosphate-binding protein PstS2 (370 aa).

An N-terminal signal peptide occupies residues 1–22 (MKFARSGAAVSLLAAGTLVLTA). Residue cysteine 23 is the site of N-palmitoyl cysteine attachment. Residue cysteine 23 is the site of S-diacylglycerol cysteine attachment. Phosphate is bound by residues 54–56 (STA), serine 84, aspartate 102, and 191–193 (SGT).

It belongs to the PstS family. In terms of assembly, the complex is composed of two ATP-binding proteins (PstB), two transmembrane proteins (PstC and PstA) and a solute-binding protein (PstS).

It is found in the cell membrane. The protein localises to the secreted. Functions in inorganic phosphate uptake, a phosphate-binding protein, although probably not the main uptake protein under phosphate starvation. Part of the ABC transporter complex PstSACB involved in phosphate import. This Mycobacterium bovis (strain BCG / Pasteur 1173P2) protein is Phosphate-binding protein PstS2 (pstS2).